The chain runs to 383 residues: Protein salvador homolog 1 (383 aa).

Residues Ser94 and Ser136 each carry the phosphoserine modification. WW domains follow at residues 199 to 232 and 234 to 267; these read LPLP…HPLE and EGLP…HPCA. At Thr210 the chain carries Phosphothreonine. The SARAH domain maps to 321-368; it reads ILKWELFQLADLDTYQGMLKLLFMKELEQIVKMYEAYRQALLTELENR. Residues 344–373 adopt a coiled-coil conformation; that stretch reads MKELEQIVKMYEAYRQALLTELENRKQRQQ.

Homodimer. Stabilized through interaction with STK3/MST2 or STK4/MST1. Interacts (via SARAH domain) with isoform 1 of NEK2. Interacts with ESR1 only in the presence of STK3/MST2. Interacts with WTIP and AJUBA. Phosphorylated by STK3/MST2 and STK4/MST1. Phosphorylation is not required for SAV1 stability and may increase the number of protein binding sites on the scaffold molecule. Ubiquitously expressed in adult tissues with highest expression in the pancreas, aorta and interventricular septum and lowest expression in skeletal muscle. Expression was higher in fetal than in the adult heart. Expressed in various cell lines.

The protein resides in the nucleus. It is found in the cytoplasm. Functionally, regulator of STK3/MST2 and STK4/MST1 in the Hippo signaling pathway which plays a pivotal role in organ size control and tumor suppression by restricting proliferation and promoting apoptosis. The core of this pathway is composed of a kinase cascade wherein STK3/MST2 and STK4/MST1, in complex with its regulatory protein SAV1, phosphorylates and activates LATS1/2 in complex with its regulatory protein MOB1, which in turn phosphorylates and inactivates YAP1 oncoprotein and WWTR1/TAZ. Phosphorylation of YAP1 by LATS1/2 inhibits its translocation into the nucleus to regulate cellular genes important for cell proliferation, cell death, and cell migration. SAV1 is required for STK3/MST2 and STK4/MST1 activation and promotes cell-cycle exit and terminal differentiation in developing epithelial tissues. Plays a role in centrosome disjunction by regulating the localization of NEK2 to centrosomes, and its ability to phosphorylate CROCC and CEP250. In conjunction with STK3/MST2, activates the transcriptional activity of ESR1 through the modulation of its phosphorylation. This chain is Protein salvador homolog 1, found in Homo sapiens (Human).